An 89-amino-acid chain; its full sequence is Small ribosomal subunit protein uS15 (89 aa).

The segment at 1 to 23 is disordered; it reads MSLGTEEKQNLINTHQVHPTDTG. The segment covering 10–23 has biased composition (polar residues); it reads NLINTHQVHPTDTG.

It belongs to the universal ribosomal protein uS15 family. Part of the 30S ribosomal subunit. Forms a bridge to the 50S subunit in the 70S ribosome, contacting the 23S rRNA.

In terms of biological role, one of the primary rRNA binding proteins, it binds directly to 16S rRNA where it helps nucleate assembly of the platform of the 30S subunit by binding and bridging several RNA helices of the 16S rRNA. Its function is as follows. Forms an intersubunit bridge (bridge B4) with the 23S rRNA of the 50S subunit in the ribosome. The sequence is that of Small ribosomal subunit protein uS15 from Prochlorococcus marinus (strain NATL2A).